A 58-amino-acid chain; its full sequence is Large ribosomal subunit protein uL30 (58 aa).

The protein belongs to the universal ribosomal protein uL30 family. In terms of assembly, part of the 50S ribosomal subunit.

The chain is Large ribosomal subunit protein uL30 from Buchnera aphidicola subsp. Baizongia pistaciae (strain Bp).